A 256-amino-acid polypeptide reads, in one-letter code: Rhamnolipids biosynthesis 3-oxoacyl-[acyl-carrier-protein] reductase (256 aa).

14–38 (VTGGSRGIGQMIAQGLLEAGARVFI) contacts NADP(+). Serine 148 serves as a coordination point for substrate. The active-site Proton acceptor is tyrosine 162.

This sequence belongs to the short-chain dehydrogenases/reductases (SDR) family.

The catalysed reaction is a (3R)-hydroxyacyl-[ACP] + NADP(+) = a 3-oxoacyl-[ACP] + NADPH + H(+). Its pathway is lipid metabolism; rhamnolipid biosynthesis. Functionally, required for the synthesis of the beta-hydroxy acid moiety of rhamnolipids. This chain is Rhamnolipids biosynthesis 3-oxoacyl-[acyl-carrier-protein] reductase (rhlG), found in Pseudomonas aeruginosa (strain ATCC 15692 / DSM 22644 / CIP 104116 / JCM 14847 / LMG 12228 / 1C / PRS 101 / PAO1).